The chain runs to 264 residues: Thymidylate synthase (264 aa).

R21 serves as a coordination point for dUMP. H51 is a (6R)-5,10-methylene-5,6,7,8-tetrahydrofolate binding site. 126 to 127 contacts dUMP; it reads RR. The active-site Nucleophile is the C146. DUMP contacts are provided by residues 166 to 169, N177, and 207 to 209; these read RSCD and HLY. D169 is a binding site for (6R)-5,10-methylene-5,6,7,8-tetrahydrofolate. S263 lines the (6R)-5,10-methylene-5,6,7,8-tetrahydrofolate pocket.

Belongs to the thymidylate synthase family. Bacterial-type ThyA subfamily. Homodimer.

The protein resides in the cytoplasm. It carries out the reaction dUMP + (6R)-5,10-methylene-5,6,7,8-tetrahydrofolate = 7,8-dihydrofolate + dTMP. The protein operates within pyrimidine metabolism; dTTP biosynthesis. Catalyzes the reductive methylation of 2'-deoxyuridine-5'-monophosphate (dUMP) to 2'-deoxythymidine-5'-monophosphate (dTMP) while utilizing 5,10-methylenetetrahydrofolate (mTHF) as the methyl donor and reductant in the reaction, yielding dihydrofolate (DHF) as a by-product. This enzymatic reaction provides an intracellular de novo source of dTMP, an essential precursor for DNA biosynthesis. This Buchnera aphidicola subsp. Acyrthosiphon pisum (strain APS) (Acyrthosiphon pisum symbiotic bacterium) protein is Thymidylate synthase.